Here is a 242-residue protein sequence, read N- to C-terminus: Zinc-finger homeodomain protein 13 (242 aa).

The segment at 64-111 (YYECRKNHAADIGTTAYDGCGEFVSSTGEEDSLNCAACGCHRNFHREE) adopts a ZF-HD dimerization-type; degenerate zinc-finger fold. Residues 144–166 (GGKSEGKKKKKEKESYGGDPIIK) are disordered. A compositionally biased stretch (basic and acidic residues) spans 155–166 (EKESYGGDPIIK). Residues 179–238 (VKRLKTKFTAEQTEKMRDYAEKLRWKVRPERQEEVEEFCVEIGVNRKNFRIWMNNHKDKI) constitute a DNA-binding region (homeobox).

As to quaternary structure, homo- and heterodimer with other ZFHD proteins. Interacts with MIF1, MIF2 and MIF3; these interactions prevent nuclear localization and DNA-binding to inhibit transcription regulation activity. Binds to ZHD11. In terms of tissue distribution, mostly expressed in flowers.

It is found in the nucleus. Functionally, putative transcription factor. The protein is Zinc-finger homeodomain protein 13 (ZHD13) of Arabidopsis thaliana (Mouse-ear cress).